We begin with the raw amino-acid sequence, 416 residues long: Probable endo-beta-1,4-glucanase celB (416 aa).

Residues 1–17 (MIWTLAPFVALLPLVTA) form the signal peptide. Asn-45, Asn-104, Asn-117, and Asn-135 each carry an N-linked (GlcNAc...) asparagine glycan. The active-site Nucleophile is Glu-214. Glu-219 functions as the Proton donor in the catalytic mechanism. Asn-233, Asn-278, Asn-292, and Asn-382 each carry an N-linked (GlcNAc...) asparagine glycan.

The protein belongs to the glycosyl hydrolase 7 (cellulase C) family.

It is found in the secreted. The enzyme catalyses Endohydrolysis of (1-&gt;4)-beta-D-glucosidic linkages in cellulose, lichenin and cereal beta-D-glucans.. In terms of biological role, has endoglucanase activity on substrates containing beta-1,4 glycosidic bonds, like in carboxymethylcellulose (CMC), hydroxyethylcellulose (HEC) and beta-glucan. Involved in the degradation of complex natural cellulosic substrates. The chain is Probable endo-beta-1,4-glucanase celB (celB) from Aspergillus flavus (strain ATCC 200026 / FGSC A1120 / IAM 13836 / NRRL 3357 / JCM 12722 / SRRC 167).